The chain runs to 198 residues: Eukaryotic translation initiation factor isoform 4E (198 aa).

Residues methionine 1–proline 25 form a disordered region. An N-acetylalanine modification is found at alanine 2. The segment covering glutamate 8–threonine 19 has biased composition (low complexity). Residues tryptophan 46 to glycine 47 and tryptophan 92 to glutamate 93 each bind mRNA. Cysteine 97 and cysteine 138 are joined by a disulfide. Arginine 145–lysine 152 is an mRNA binding site.

This sequence belongs to the eukaryotic initiation factor 4E family. EIF4F is a multi-subunit complex, the composition of which varies with external and internal environmental conditions. It is composed of at least EIF4A, EIF4E and EIF4G. EIF4E is also known to interact with other partners. In higher plants two isoforms of EIF4F have been identified, named isoform EIF4F and isoform EIF(iso)4F. Isoform EIF4F has subunits p220 and p26, whereas isoform EIF(iso)4F has subunits p82 and p28. This isoform interacts with the viral protein genome linked (VPg)-proteinase of turnip mosaic potyvirus. Interacts directly with LOX2. Interacts with BTF3. In terms of processing, according to the redox status, the Cys-97-Cys-138 disulfide bridge may have a role in regulating protein function by affecting its ability to bind capped mRNA. As to expression, abundant in floral organs and in young developing tissues.

Recognizes and binds the 7-methylguanosine-containing mRNA cap during an early step in the initiation of protein synthesis and facilitates ribosome binding by inducing the unwinding of the mRNAs secondary structures. Mediates susceptibility to Turnipmosaic potyvirus (TuMV) and Tobacco etch potyvirus (TEV). The polypeptide is Eukaryotic translation initiation factor isoform 4E (EIF(ISO)4E) (Arabidopsis thaliana (Mouse-ear cress)).